The primary structure comprises 90 residues: Co-chaperonin GroES (90 aa).

It belongs to the GroES chaperonin family. Heptamer of 7 subunits arranged in a ring. Interacts with the chaperonin GroEL.

It is found in the cytoplasm. Together with the chaperonin GroEL, plays an essential role in assisting protein folding. The GroEL-GroES system forms a nano-cage that allows encapsulation of the non-native substrate proteins and provides a physical environment optimized to promote and accelerate protein folding. GroES binds to the apical surface of the GroEL ring, thereby capping the opening of the GroEL channel. This chain is Co-chaperonin GroES, found in Fusobacterium nucleatum subsp. polymorphum (Fusobacterium polymorphum).